Reading from the N-terminus, the 503-residue chain is Maturase K (503 aa).

It belongs to the intron maturase 2 family. MatK subfamily.

It localises to the plastid. The protein localises to the chloroplast. Its function is as follows. Usually encoded in the trnK tRNA gene intron. Probably assists in splicing its own and other chloroplast group II introns. The protein is Maturase K of Rosa foetida (Austrian briar).